Consider the following 245-residue polypeptide: tRNA pseudouridine synthase A (245 aa).

Aspartate 52 (nucleophile) is an active-site residue. Tyrosine 111 provides a ligand contact to substrate.

Belongs to the tRNA pseudouridine synthase TruA family. In terms of assembly, homodimer.

It catalyses the reaction uridine(38/39/40) in tRNA = pseudouridine(38/39/40) in tRNA. In terms of biological role, formation of pseudouridine at positions 38, 39 and 40 in the anticodon stem and loop of transfer RNAs. The sequence is that of tRNA pseudouridine synthase A from Xanthobacter autotrophicus (strain ATCC BAA-1158 / Py2).